The primary structure comprises 895 residues: Androgen receptor (895 aa).

Positions 1-533 (MEVQLGLGRV…PIDYYFPPQK (533 aa)) are modulating. Residues 1–562 (MEVQLGLGRV…GSCKVFFKRA (562 aa)) are interaction with ZNF318. Disordered regions lie at residues 33–150 (VIQN…LSLL) and 178–211 (QQQQ…YLEG). 2 stretches are compositionally biased toward low complexity: residues 44–81 (AASA…GSPQ) and 178–200 (QQQQ…ASGA). Phosphoserine; by CDK9 is present on Ser65. A Phosphoserine modification is found at Ser79. Residues 201-211 (PTSSKDNYLEG) are compositionally biased toward polar residues. The residue at position 208 (Tyr208) is a Phosphotyrosine; by CSK. Phosphoserine is present on Ser241. The residue at position 252 (Tyr252) is a Phosphotyrosine; by CSK and TNK2. Tyr292, Tyr331, Tyr342, and Tyr347 each carry phosphotyrosine; by CSK. Tyr348 carries the post-translational modification Phosphotyrosine; by CSK and TNK2. Lys371 participates in a covalent cross-link: Glycyl lysine isopeptide (Lys-Gly) (interchain with G-Cter in SUMO). At Tyr378 the chain carries Phosphotyrosine; by CSK. Residue Lys496 forms a Glycyl lysine isopeptide (Lys-Gly) (interchain with G-Cter in SUMO) linkage. 2 positions are modified to phosphotyrosine; by CSK: Tyr510 and Tyr527. Residues 527–894 (YYFPPQKTCL…GKVKPIYFHT (368 aa)) form an interaction with LPXN region. The nuclear receptor DNA-binding region spans 534 to 607 (TCLICGDEAS…AGMTLGARKL (74 aa)). NR C4-type zinc fingers lie at residues 535 to 555 (CLIC…CGSC) and 571 to 595 (CASR…LRKC). The segment at 547-637 (YGALTCGSCK…TEETAQKLTV (91 aa)) is interaction with HIPK3. The interval 567–894 (QKYLCASRND…GKVKPIYFHT (328 aa)) is interaction with CCAR1. An interaction with KAT7 region spans residues 600 to 894 (MTLGARKLKK…GKVKPIYFHT (295 aa)). At Ser626 the chain carries Phosphoserine; by STK4/MST1. Residues 644–875 (ECQPIFLNVL…DFPEMMAEII (232 aa)) enclose the NR LBD domain. Positions 681 and 728 each coordinate 17beta-hydroxy-5alpha-androstan-3-one. Residues Lys821 and Lys823 each participate in a glycyl lysine isopeptide (Lys-Gly) (interchain with G-Cter in ubiquitin) cross-link. Thr853 is a 17beta-hydroxy-5alpha-androstan-3-one binding site. Phosphotyrosine; by CSK is present on Tyr891.

It belongs to the nuclear hormone receptor family. NR3 subfamily. As to quaternary structure, binds DNA as a homodimer. Part of a ternary complex containing AR, EFCAB6/DJBP and PARK7. Interacts with HIPK3 and NR0B2 in the presence of androgen. The ligand binding domain interacts with KAT7/HBO1 in the presence of dihydrotestosterone. Interacts with EFCAB6/DJBP, PQBP1, RANBP9, RBAK, SPDEF, SRA1, TGFB1I1 and RREB1. Interacts with ZMIZ1/ZIMP10 and ZMIZ2/ZMIP7 which both enhance its transactivation activity. Interacts with SLC30A9 and RAD54L2/ARIP4. Interacts with MACROD1 (via macro domain). Interacts via the ligand-binding domain with LXXLL and FXXLF motifs from NCOA1, NCOA2, NCOA3 and MAGEA11. Interacts (via nuclear receptor DNA binding domain and nuclear receptor ligand binding domain) with NCOA4. The AR N-terminal poly-Gln region binds Ran resulting in enhancement of AR-mediated transactivation. Ran-binding decreases as the poly-Gln length increases. Interacts with HIP1 (via coiled coil domain). Interacts (via ligand-binding domain) with TRIM68. Interacts with TNK2. Interacts with USP26. Interacts with RNF6. Interacts (regulated by RNF6 probably through polyubiquitination) with RNF14; regulates AR transcriptional activity. Interacts with PRMT2 and TRIM24. Interacts with RACK1. Interacts with RANBP10; this interaction enhances dihydrotestosterone-induced AR transcriptional activity. Interacts with PRPF6 in a hormone-independent way; this interaction enhances dihydrotestosterone-induced AR transcriptional activity. Interacts with STK4/MST1. Interacts with ZIPK/DAPK3. Interacts with LPXN. Interacts with MAK. Part of a complex containing AR, MAK and NCOA3. Interacts with CRY1. Interacts with CCAR1 and GATA2. Interacts with ZNF318. Interacts with BUD31. Interacts with ARID4A. Interacts with ARID4B. Interacts (via NR LBD domain) with ZBTB7A; the interaction is direct and androgen-dependent. Interacts with NCOR1. Interacts with NCOR2. Interacts with CRY2 in a ligand-dependent manner. Post-translationally, phosphorylated in prostate cancer cells in response to several growth factors including EGF. Phosphorylation is induced by c-Src kinase (CSK). Tyr-510 is one of the major phosphorylation sites and an increase in phosphorylation and Src kinase activity is associated with prostate cancer progression. Phosphorylation by TNK2 enhances the DNA-binding and transcriptional activity. Phosphorylation at Ser-65 by CDK9 regulates AR promoter selectivity and cell growth. Sumoylated on Lys-371 (major) and Lys-496. Ubiquitinated. Deubiquitinated by USP26. 'Lys-6' and 'Lys-27'-linked polyubiquitination by RNF6 modulates AR transcriptional activity and specificity. In terms of processing, palmitoylated by ZDHHC7 and ZDHHC21. Palmitoylation is required for plasma membrane targeting and for rapid intracellular signaling via ERK and AKT kinases and cAMP generation.

It is found in the nucleus. The protein resides in the cytoplasm. Its function is as follows. Steroid hormone receptors are ligand-activated transcription factors that regulate eukaryotic gene expression and affect cellular proliferation and differentiation in target tissues. Transcription factor activity is modulated by bound coactivator and corepressor proteins like ZBTB7A that recruits NCOR1 and NCOR2 to the androgen response elements/ARE on target genes, negatively regulating androgen receptor signaling and androgen-induced cell proliferation. Transcription activation is also down-regulated by NR0B2. Activated, but not phosphorylated, by HIPK3 and ZIPK/DAPK3. This Macaca mulatta (Rhesus macaque) protein is Androgen receptor (AR).